The chain runs to 452 residues: Sensor histidine kinase HprS (452 aa).

Topologically, residues 1 to 9 (MKRLSITVR) are cytoplasmic. A helical membrane pass occupies residues 10–30 (LTLLFILLLSVAGAGIVWTLY). At 31–158 (NGLASELKWR…ARHNMLEQYK (128 aa)) the chain is on the periplasmic side. A helical membrane pass occupies residues 159-179 (INSIIICIVAIVLCSVLSPLL). Residues 180–452 (IRTGLREIKK…VFRITLPQRN (273 aa)) lie on the Cytoplasmic side of the membrane. An HAMP domain is found at 181–234 (RTGLREIKKLSGVTEALNYNDSREPVEVSALPRELKPLGQALNKMHHALVKDFE). Residues 242 to 452 (DLAHELRTPI…VFRITLPQRN (211 aa)) enclose the Histidine kinase domain. Histidine 245 bears the Phosphohistidine; by autocatalysis mark.

Autophosphorylated.

It localises to the cell inner membrane. It catalyses the reaction ATP + protein L-histidine = ADP + protein N-phospho-L-histidine.. Member of a two-component regulatory system HprR/HprS involved in response to hydrogen peroxide. Senses H(2)O(2), maybe via the redox state of the membrane. Activates HprR by phosphorylation. Can also phosphorylate CusR. This chain is Sensor histidine kinase HprS, found in Escherichia coli (strain K12).